The primary structure comprises 173 residues: Co-chaperone protein HscB homolog (173 aa).

Residues 5–77 (SHFALFDLEP…SQRARYLLSL (73 aa)) form the J domain.

The protein belongs to the HscB family. Interacts with HscA and stimulates its ATPase activity.

In terms of biological role, co-chaperone involved in the maturation of iron-sulfur cluster-containing proteins. Seems to help targeting proteins to be folded toward HscA. The chain is Co-chaperone protein HscB homolog from Azotobacter vinelandii (strain DJ / ATCC BAA-1303).